The chain runs to 282 residues: Probable methylxanthine N7-demethylase NdmC (282 aa).

It carries out the reaction 7-methylxanthine + NADPH + O2 + H(+) = xanthine + formaldehyde + NADP(+) + H2O. The enzyme catalyses 7-methylxanthine + NADH + O2 + H(+) = xanthine + formaldehyde + NAD(+) + H2O. In terms of biological role, involved in the caffeine degradation, which is the essential first step for assimilating the carbon and nitrogen in caffeine. Probably catalyzes the N7-demethylation of 7-methylxanthine to produce xanthine and formaldehyde. The chain is Probable methylxanthine N7-demethylase NdmC from Pseudomonas sp. (strain TJI-51).